Here is a 308-residue protein sequence, read N- to C-terminus: Tetraacyldisaccharide 4'-kinase (308 aa).

Residue 63 to 70 (SFGGNGKT) participates in ATP binding.

This sequence belongs to the LpxK family.

It catalyses the reaction a lipid A disaccharide + ATP = a lipid IVA + ADP + H(+). It functions in the pathway glycolipid biosynthesis; lipid IV(A) biosynthesis; lipid IV(A) from (3R)-3-hydroxytetradecanoyl-[acyl-carrier-protein] and UDP-N-acetyl-alpha-D-glucosamine: step 6/6. Transfers the gamma-phosphate of ATP to the 4'-position of a tetraacyldisaccharide 1-phosphate intermediate (termed DS-1-P) to form tetraacyldisaccharide 1,4'-bis-phosphate (lipid IVA). The chain is Tetraacyldisaccharide 4'-kinase from Campylobacter jejuni subsp. jejuni serotype O:23/36 (strain 81-176).